The chain runs to 149 residues: Urease accessory protein UreE (149 aa).

It belongs to the UreE family.

It localises to the cytoplasm. In terms of biological role, involved in urease metallocenter assembly. Binds nickel. Probably functions as a nickel donor during metallocenter assembly. The sequence is that of Urease accessory protein UreE from Prochlorococcus marinus (strain AS9601).